The following is a 513-amino-acid chain: Maturase K (513 aa).

The protein belongs to the intron maturase 2 family. MatK subfamily.

Its subcellular location is the plastid. The protein resides in the chloroplast. In terms of biological role, usually encoded in the trnK tRNA gene intron. Probably assists in splicing its own and other chloroplast group II introns. The polypeptide is Maturase K (Cyrilla racemiflora (Swamp titi)).